Reading from the N-terminus, the 236-residue chain is MICOS complex subunit MIC25 (236 aa).

A compositionally biased stretch (basic and acidic residues) spans 1–11; the sequence is MGSAESREGRR. Positions 1–22 are disordered; that stretch reads MGSAESREGRRASFGMDEEERV. Residue glycine 2 is the site of N-myristoyl glycine attachment. Phosphoserine is present on residues serine 13 and serine 31. 2 disordered regions span residues 34-86 and 109-132; these read VVNR…VQVD and EREA…DQEK. A compositionally biased stretch (low complexity) spans 48–58; the sequence is GLLAPPAAALG. Basic and acidic residues-rich tracts occupy residues 62-71 and 122-132; these read GREKDSKPPR and RRGEGGVDQEK. Residues 127 to 167 adopt a coiled-coil conformation; the sequence is GVDQEKQRLAQRARELESQEEELRCRDAFYKEQLGRLERQN. The region spanning 195-236 is the CHCH domain; that stretch reads EPVCSGLQAQILRCYRDRLQEVLLCADLVRAYQHCVSSAHKG. Short sequence motifs (cx9C motif) lie at residues 198 to 208 and 219 to 229; these read CSGLQAQILRC and CADLVRAYQHC. Intrachain disulfides connect cysteine 198-cysteine 229 and cysteine 208-cysteine 219.

It belongs to the MICOS complex subunit Mic19 family. Metazoan Mic25 subfamily. As to quaternary structure, component of the mitochondrial contact site and cristae organizing system (MICOS) complex, composed of at least MICOS10/MIC10, CHCHD3/MIC19, CHCHD6/MIC25, APOOL/MIC27, IMMT/MIC60, APOO/MIC23/MIC26 and MICOS13/MIC13. This complex was also known under the names MINOS or MitOS complex. The MICOS complex associates with mitochondrial outer membrane proteins SAMM50, MTX1 and MTX2 (together described as components of the mitochondrial outer membrane sorting assembly machinery (SAM) complex) and DNAJC11, mitochondrial inner membrane protein TMEM11 and with HSPA9. The MICOS and SAM complexes together with DNAJC11 are part of a large protein complex spanning both membranes termed the mitochondrial intermembrane space bridging (MIB) complex. Interacts with DISC1. Interacts with IMMT/MIC60.

Its subcellular location is the mitochondrion inner membrane. It is found in the mitochondrion. Component of the MICOS complex, a large protein complex of the mitochondrial inner membrane that plays crucial roles in the maintenance of crista junctions, inner membrane architecture, and formation of contact sites to the outer membrane. This chain is MICOS complex subunit MIC25 (CHCHD6), found in Bos taurus (Bovine).